The sequence spans 210 residues: Thymidylate kinase (210 aa).

11–18 contacts ATP; that stretch reads GVDGAGKT.

Belongs to the thymidylate kinase family.

The catalysed reaction is dTMP + ATP = dTDP + ADP. Functionally, phosphorylation of dTMP to form dTDP in both de novo and salvage pathways of dTTP synthesis. This chain is Thymidylate kinase (tmk), found in Mycoplasma pneumoniae (strain ATCC 29342 / M129 / Subtype 1) (Mycoplasmoides pneumoniae).